Consider the following 303-residue polypeptide: tRNA dimethylallyltransferase (303 aa).

An ATP-binding site is contributed by 9 to 16 (GPTAVGKT). 11–16 (TAVGKT) contacts substrate. Residues 34 to 37 (DSRQ) form an interaction with substrate tRNA region.

It belongs to the IPP transferase family. As to quaternary structure, monomer. Mg(2+) is required as a cofactor.

It carries out the reaction adenosine(37) in tRNA + dimethylallyl diphosphate = N(6)-dimethylallyladenosine(37) in tRNA + diphosphate. Its function is as follows. Catalyzes the transfer of a dimethylallyl group onto the adenine at position 37 in tRNAs that read codons beginning with uridine, leading to the formation of N6-(dimethylallyl)adenosine (i(6)A). The chain is tRNA dimethylallyltransferase from Petrotoga mobilis (strain DSM 10674 / SJ95).